The sequence spans 368 residues: Queuine tRNA-ribosyltransferase (368 aa).

Asp89 acts as the Proton acceptor in catalysis. Residues 89 to 93 (DSGGF), Asp143, and Gly216 each bind substrate. The segment at 247–253 (GVGKPED) is RNA binding. Asp266 serves as the catalytic Nucleophile. The interval 271 to 275 (TRNAR) is RNA binding; important for wobble base 34 recognition. The Zn(2+) site is built by Cys304, Cys306, Cys309, and His335.

This sequence belongs to the queuine tRNA-ribosyltransferase family. As to quaternary structure, homodimer. Within each dimer, one monomer is responsible for RNA recognition and catalysis, while the other monomer binds to the replacement base PreQ1. Requires Zn(2+) as cofactor.

The catalysed reaction is 7-aminomethyl-7-carbaguanine + guanosine(34) in tRNA = 7-aminomethyl-7-carbaguanosine(34) in tRNA + guanine. It participates in tRNA modification; tRNA-queuosine biosynthesis. Catalyzes the base-exchange of a guanine (G) residue with the queuine precursor 7-aminomethyl-7-deazaguanine (PreQ1) at position 34 (anticodon wobble position) in tRNAs with GU(N) anticodons (tRNA-Asp, -Asn, -His and -Tyr). Catalysis occurs through a double-displacement mechanism. The nucleophile active site attacks the C1' of nucleotide 34 to detach the guanine base from the RNA, forming a covalent enzyme-RNA intermediate. The proton acceptor active site deprotonates the incoming PreQ1, allowing a nucleophilic attack on the C1' of the ribose to form the product. After dissociation, two additional enzymatic reactions on the tRNA convert PreQ1 to queuine (Q), resulting in the hypermodified nucleoside queuosine (7-(((4,5-cis-dihydroxy-2-cyclopenten-1-yl)amino)methyl)-7-deazaguanosine). In Buchnera aphidicola subsp. Schizaphis graminum (strain Sg), this protein is Queuine tRNA-ribosyltransferase.